The sequence spans 493 residues: Glutamyl-tRNA(Gln) amidotransferase subunit A (493 aa).

Active-site charge relay system residues include Lys79 and Ser159. Ser183 serves as the catalytic Acyl-ester intermediate.

Belongs to the amidase family. GatA subfamily. In terms of assembly, heterotrimer of A, B and C subunits.

It catalyses the reaction L-glutamyl-tRNA(Gln) + L-glutamine + ATP + H2O = L-glutaminyl-tRNA(Gln) + L-glutamate + ADP + phosphate + H(+). Allows the formation of correctly charged Gln-tRNA(Gln) through the transamidation of misacylated Glu-tRNA(Gln) in organisms which lack glutaminyl-tRNA synthetase. The reaction takes place in the presence of glutamine and ATP through an activated gamma-phospho-Glu-tRNA(Gln). This is Glutamyl-tRNA(Gln) amidotransferase subunit A from Rhizobium meliloti (strain 1021) (Ensifer meliloti).